The sequence spans 609 residues: MKWVTFISLLFLFSSAYSRGVFRRDAHKSEVAHRFKDLGEENFKALVLIAFAQYLQQCPFEDHVKLVNEVTEFAKTCVADESAENCDKSLHTLFGDKLCTVATLRETYGEMADCCAKQEPERNECFLQHKDDNPNLPRLVRPEVDVMCTAFHDNEETFLKKYLYEIARRHPYFYAPELLFFAKRYKAAFTECCQAADKAACLLPKLDELRDEGKASSAKQRLKCASLQKFGERAFKAWAVARLSQRFPKAEFAEVSKLVTDLTKVHTECCHGDLLECADDRADLAKYICENQDSISSKLKECCEKPLLEKSHCIAEVENDEMPADLPSLAADFVESKDVCKNYAEAKDVFLGMFLYEYARRHPDYSVVLLLRLAKTYETTLEKCCAAADPHECYAKVFDEFKPLVEEPQNLIKQNCELFEQLGEYKFQNALLVRYTKKVPQVSTPTLVEVSRNLGKVGSKCCKHPEAKRMPCAEDYLSVVLNQLCVLHEKTPVSDRVTKCCTESLVNRRPCFSALEVDETYVPKEFNAETFTFHADICTLSEKERQIKKQTALVELVKHKPKATKEQLKAVMDDFAAFVEKCCKADDKETCFAEEGKKLVAASQAALGL.

Residues 1–18 (MKWVTFISLLFLFSSAYS) form the signal peptide. Positions 19 to 24 (RGVFRR) are excised as a propeptide. Albumin domains lie at 19–210 (RGVF…DELR), 211–403 (DEGK…EFKP), and 404–601 (LVEE…KLVA). Residue H27 coordinates Cu cation. Position 29 is a phosphoserine; by FAM20C (S29). E30 provides a ligand contact to Ca(2+). N-linked (Glc) (glycation) lysine glycosylation occurs at K36. D37 is a binding site for Ca(2+). The N-linked (Glc) (glycation) lysine; in vitro glycan is linked to K75. C77 and C86 are joined by a disulfide. Residues S82 and S89 each carry the phosphoserine; by FAM20C modification. H91 lines the Zn(2+) pocket. 4 disulfide bridges follow: C99–C115, C114–C125, C148–C193, and C192–C201. The residue at position 107 (T107) is a Phosphothreonine; by FAM20C. Residues K161 and K186 are each glycosylated (N-linked (Glc) (glycation) lysine; in vitro). K223 is a glycosylation site (N-linked (Glc) (glycation) lysine; in vitro). Intrachain disulfides connect C224–C270 and C269–C277. K229 bears the N6-succinyllysine mark. K249 carries N-linked (Glc) (glycation) lysine; in vitro glycosylation. K257 is a glycosylation site (N-linked (Glc) (glycation) lysine). Residue K264 participates in (4Z,15Z)-bilirubin IXalpha binding. E268 is a binding site for Ca(2+). Residues H271 and D273 each coordinate Zn(2+). 4 residues coordinate Ca(2+): D273, E276, D279, and D283. 2 disulfides stabilise this stretch: C289-C303 and C302-C313. Residue S297 is modified to Phosphoserine. K300 carries N-linked (Glc) (glycation) lysine; in vitro glycosylation. K305 carries N-linked (Glc) (glycation) lysine glycosylation. K337 is a glycosylation site (N-linked (Glc) (glycation) lysine; in vitro). 2 cysteine pairs are disulfide-bonded: C340-C385 and C384-C393. K341 is a glycosylation site (N-linked (Glc) (glycation) lysine). N342 carries N-linked (GlcNAc...) asparagine; in variant Redhill glycosylation. N-linked (Glc) (glycation) lysine; in vitro glycosylation is present at K347. A glycan (N-linked (Glc) (glycation) lysine) is linked at K375. K402 and K437 each carry an N-linked (Glc) (glycation) lysine; in vitro glycan. Disulfide bonds link C416–C462, C461–C472, C485–C501, and C500–C511. Position 443 is a phosphoserine (S443). 2 positions are modified to phosphothreonine: T444 and T446. K460 is modified (N6-succinyllysine). The N-linked (Glc) (glycation) lysine glycan is linked to K463. N-linked (Glc) (glycation) lysine; in vitro glycosylation is present at K468. Position 513 is a phosphoserine (S513). N-linked (GlcNAc...) asparagine; in variant Casebrook glycosylation is present at D518. Cystine bridges form between C538/C583 and C582/C591. K543 bears the N6-succinyllysine mark. N-linked (Glc) (glycation) lysine glycosylation occurs at K549. The residue at position 558 (K558) is an N6-methyllysine; alternate. Residue K558 is glycosylated (N-linked (Glc) (glycation) lysine; alternate). N-linked (Glc) (glycation) lysine; in vitro glycosylation is found at K560 and K569. K588 is modified (N6-succinyllysine). N-linked (Glc) (glycation) lysine; in vitro glycosylation is present at K597.

Belongs to the ALB/AFP/VDB family. As to quaternary structure, interacts with FCGRT; this interaction regulates ALB homeostasis. Interacts with TASOR. In plasma, occurs in a covalently-linked complex with chromophore-bound alpha-1-microglobulin with molar ratio 1:2 and 1:1; this interaction does not prevent fatty acid binding to ALB. In terms of processing, kenitra variant is partially O-glycosylated at Thr-620. It has two new disulfide bonds Cys-600 to Cys-602 and Cys-601 to Cys-606. Glycated in diabetic patients. Post-translationally, phosphorylated by FAM20C in the extracellular medium. In terms of processing, acetylated on Lys-223 by acetylsalicylic acid. In terms of tissue distribution, plasma.

It localises to the secreted. Binds water, Ca(2+), Na(+), K(+), fatty acids, hormones, bilirubin and drugs. Its main function is the regulation of the colloidal osmotic pressure of blood. Major zinc transporter in plasma, typically binds about 80% of all plasma zinc. Major calcium and magnesium transporter in plasma, binds approximately 45% of circulating calcium and magnesium in plasma. Potentially has more than two calcium-binding sites and might additionally bind calcium in a non-specific manner. The shared binding site between zinc and calcium at residue Asp-273 suggests a crosstalk between zinc and calcium transport in the blood. The rank order of affinity is zinc &gt; calcium &gt; magnesium. Binds to the bacterial siderophore enterobactin and inhibits enterobactin-mediated iron uptake of E.coli from ferric transferrin, and may thereby limit the utilization of iron and growth of enteric bacteria such as E.coli. Does not prevent iron uptake by the bacterial siderophore aerobactin. In Homo sapiens (Human), this protein is Albumin (ALB).